The sequence spans 50 residues: Insulin (50 aa).

Disulfide bonds link Cys7/Cys36, Cys19/Cys49, and Cys35/Cys40.

This sequence belongs to the insulin family. As to quaternary structure, heterodimer of a B chain and an A chain linked by two disulfide bonds.

Its subcellular location is the secreted. Insulin decreases blood glucose concentration. It increases cell permeability to monosaccharides, amino acids and fatty acids. It accelerates glycolysis, the pentose phosphate cycle, and glycogen synthesis in liver. The chain is Insulin (ins) from Katsuwonus pelamis (Skipjack tuna).